The primary structure comprises 387 residues: 3-ketoacyl-CoA thiolase (387 aa).

Catalysis depends on cysteine 91, which acts as the Acyl-thioester intermediate. Active-site proton acceptor residues include histidine 343 and cysteine 373.

It belongs to the thiolase-like superfamily. Thiolase family. As to quaternary structure, heterotetramer of two alpha chains (FadB) and two beta chains (FadA).

The protein resides in the cytoplasm. The catalysed reaction is an acyl-CoA + acetyl-CoA = a 3-oxoacyl-CoA + CoA. It functions in the pathway lipid metabolism; fatty acid beta-oxidation. Catalyzes the final step of fatty acid oxidation in which acetyl-CoA is released and the CoA ester of a fatty acid two carbons shorter is formed. In Escherichia coli O9:H4 (strain HS), this protein is 3-ketoacyl-CoA thiolase.